Here is a 194-residue protein sequence, read N- to C-terminus: Glycerol-3-phosphate acyltransferase (194 aa).

5 helical membrane-spanning segments follow: residues 4 to 24 (ELIL…LLLA), 80 to 100 (WVAA…FLGF), 112 to 132 (VFLG…IGIV), 137 to 157 (YISL…AAVE), and 161 to 181 (LLVG…RENI).

This sequence belongs to the PlsY family. Probably interacts with PlsX.

The protein localises to the cell inner membrane. It catalyses the reaction an acyl phosphate + sn-glycerol 3-phosphate = a 1-acyl-sn-glycero-3-phosphate + phosphate. Its pathway is lipid metabolism; phospholipid metabolism. Catalyzes the transfer of an acyl group from acyl-phosphate (acyl-PO(4)) to glycerol-3-phosphate (G3P) to form lysophosphatidic acid (LPA). This enzyme utilizes acyl-phosphate as fatty acyl donor, but not acyl-CoA or acyl-ACP. The polypeptide is Glycerol-3-phosphate acyltransferase (Geobacter sulfurreducens (strain ATCC 51573 / DSM 12127 / PCA)).